The chain runs to 148 residues: 3-hydroxyacyl-[acyl-carrier-protein] dehydratase FabZ (148 aa).

Residue H48 is part of the active site.

This sequence belongs to the thioester dehydratase family. FabZ subfamily.

Its subcellular location is the cytoplasm. The enzyme catalyses a (3R)-hydroxyacyl-[ACP] = a (2E)-enoyl-[ACP] + H2O. In terms of biological role, involved in unsaturated fatty acids biosynthesis. Catalyzes the dehydration of short chain beta-hydroxyacyl-ACPs and long chain saturated and unsaturated beta-hydroxyacyl-ACPs. The chain is 3-hydroxyacyl-[acyl-carrier-protein] dehydratase FabZ from Nitratiruptor sp. (strain SB155-2).